We begin with the raw amino-acid sequence, 108 residues long: Nucleoid-associated protein Mmwyl1_2533 (108 aa).

Positions 1–22 (MFKGGMGNMMRQAQQMQENMQK) are disordered. The segment covering 11 to 22 (RQAQQMQENMQK) has biased composition (polar residues).

Belongs to the YbaB/EbfC family. In terms of assembly, homodimer.

It localises to the cytoplasm. Its subcellular location is the nucleoid. In terms of biological role, binds to DNA and alters its conformation. May be involved in regulation of gene expression, nucleoid organization and DNA protection. The sequence is that of Nucleoid-associated protein Mmwyl1_2533 from Marinomonas sp. (strain MWYL1).